The primary structure comprises 438 residues: Methyl-coenzyme M reductase subunit beta (438 aa).

Tyrosine 367 contributes to the coenzyme M binding site. Position 369 (glycine 369) interacts with coenzyme B.

It belongs to the methyl-coenzyme M reductase beta subunit family. In terms of assembly, MCR is a hexamer of two alpha, two beta, and two gamma chains, forming a dimer of heterotrimers. Requires coenzyme F430 as cofactor.

It is found in the cytoplasm. The catalysed reaction is coenzyme B + methyl-coenzyme M = methane + coenzyme M-coenzyme B heterodisulfide. Its pathway is one-carbon metabolism; methyl-coenzyme M reduction; methane from methyl-coenzyme M: step 1/1. Component of the methyl-coenzyme M reductase (MCR) I that catalyzes the reductive cleavage of methyl-coenzyme M (CoM-S-CH3 or 2-(methylthio)ethanesulfonate) using coenzyme B (CoB or 7-mercaptoheptanoylthreonine phosphate) as reductant which results in the production of methane and the mixed heterodisulfide of CoB and CoM (CoM-S-S-CoB). This is the final step in methanogenesis. The chain is Methyl-coenzyme M reductase subunit beta (mcrB) from Methanothermus fervidus.